The chain runs to 261 residues: tRNA pseudouridine synthase A (261 aa).

D51 serves as the catalytic Nucleophile. Substrate is bound at residue Y109.

The protein belongs to the tRNA pseudouridine synthase TruA family. Homodimer.

The catalysed reaction is uridine(38/39/40) in tRNA = pseudouridine(38/39/40) in tRNA. Its function is as follows. Formation of pseudouridine at positions 38, 39 and 40 in the anticodon stem and loop of transfer RNAs. The chain is tRNA pseudouridine synthase A from Shewanella pealeana (strain ATCC 700345 / ANG-SQ1).